Consider the following 1168-residue polypeptide: Protein VARIATION IN COMPOUND TRIGGERED ROOT growth response (1168 aa).

Residues 10–171 (WVYDVFLSFS…EIANDVLAKL (162 aa)) enclose the TIR domain. Residue Glu-85 is part of the active site. The NB-ARC domain maps to 187-452 (EDHIANMSVL…ACLFNHVKVR (266 aa)). 10 LRR repeats span residues 539–562 (TSKVSEFCVHENAFKGMGNLLFLD), 606–629 (LRNLVKLEMHDSKLEKLWEGAMSF), 631–653 (CLKELDMWASKYLKEIPDLSKAT), 676–699 (LNKLLELNMEYCGELETLPTGFNL), 701–720 (SLDYLNFNECWKLRTFPEFA), 721–744 (TNISNLILAETSIEEYPSNLYFKN), 795–820 (LNNLERLDICYCRNLESLPTGINLES), 839–865 (STNIKYLDLDQTGIEEVPWQIENFFNL), 873–896 (CRELKCVSLNIFKLKHLGEVSFSN), and 1065–1089 (NVPLSQLNYDHVDINIHITSGDWRS).

Belongs to the disease resistance NB-LRR family. Part of a nuclear protein complex made of VICTR, PAD4 and EDS1. Interacts (via TIR domain) with PAD4 and EDS1.

It localises to the cytoplasm. It is found in the nucleus. The catalysed reaction is NAD(+) + H2O = ADP-D-ribose + nicotinamide + H(+). Its function is as follows. Disease resistance protein of the TIR-NB-LRR-type. Part of the RPS6 locus that contains a cluster of several paralogous disease resistance (R) genes. Resistance proteins guard the plant against pathogens that contain an appropriate avirulence protein via an indirect interaction with this avirulence protein. That triggers a defense system including the hypersensitive response, which restricts the pathogen growth. Required for [5-(3,4-dichlorophenyl)furan-2-yl]-piperidine-1-ylmethanethione-(DFPM-) induced root growth arrest due to reduced number of meristem cells in the division zone of the primary root and inhibition of abscisic acid- (ABA-) induced stomatal closing. This Arabidopsis thaliana (Mouse-ear cress) protein is Protein VARIATION IN COMPOUND TRIGGERED ROOT growth response (VICTR).